We begin with the raw amino-acid sequence, 467 residues long: MAQTLYDKLWDAHVVHQESDGTCMLYIDRHLLHEVTSPQAFEGLALAGRQPWRVGANLAVADHNVPTLNRAQGIEDPISRLQVDTLDDNCAKYGITEFRMNDLRQGIVHVIGPEQGATLPGMTVVCGDSHTSTHGALGALAFGIGTSEVEHVLATQTLLMKKAKSMQINVEGELPFGCTAKDVVLHIIGIIGTAGGTGHAIEFSGSTIRGLSVEGRMTVCNMAIEAGARSGMVAVDDKTIDYFRGRPFAPVGVLWDQAVGYWRTLHSDAGARFDRVINVDARDIKPQVTWGTSPEMVLPVDGRVPDPDREKDDVRRSGMERALEYMGLKPNTPLVDIRVDRVFIGSCTNSRIEDLRAAAVVARGKRVAANVRQAMVVPGSGLVKQQAEREGLDKIFIEAGFEWREPGCSMCLAMNADRLEPGERCASTSNRNFEGRQGQGGRTHLVSPAMAAAAAVAGHFVDVRSFR.

3 residues coordinate [4Fe-4S] cluster: cysteine 347, cysteine 408, and cysteine 411.

This sequence belongs to the aconitase/IPM isomerase family. LeuC type 1 subfamily. As to quaternary structure, heterodimer of LeuC and LeuD. It depends on [4Fe-4S] cluster as a cofactor.

It carries out the reaction (2R,3S)-3-isopropylmalate = (2S)-2-isopropylmalate. It functions in the pathway amino-acid biosynthesis; L-leucine biosynthesis; L-leucine from 3-methyl-2-oxobutanoate: step 2/4. Catalyzes the isomerization between 2-isopropylmalate and 3-isopropylmalate, via the formation of 2-isopropylmaleate. This Bordetella pertussis (strain Tohama I / ATCC BAA-589 / NCTC 13251) protein is 3-isopropylmalate dehydratase large subunit.